The sequence spans 188 residues: Apolipophorin-3 (188 aa).

The signal sequence occupies residues 1 to 17 (MVAKLFVLVACIALSHA). A propeptide spanning residues 18–22 (AMVRR) is cleaved from the precursor.

Belongs to the insect apolipophorin-3 family. Equilibrium between a soluble monomer and a bound lipoprotein form. Apolipophorin-3 associates with lipophorin during lipid loading until each particle contains 9 or 14 molecules of apolipophorin-3. In terms of tissue distribution, expressed in fat body and secreted in hemolymph. Also expressed in ovary and testis at lower levels.

The protein resides in the secreted. Assists in the loading of diacylglycerol, generated from triacylglycerol stores in the fat body through the action of adipokinetic hormone, into lipophorin, the hemolymph lipoprotein. It increases the lipid carrying capacity of lipophorin by covering the expanding hydrophobic surface resulting from diacylglycerol uptake. It thus plays a critical role in the transport of lipids during flight in several species of insects. This chain is Apolipophorin-3, found in Spodoptera litura (Asian cotton leafworm).